A 663-amino-acid chain; its full sequence is MLRSCDIDAIQKAYQSIIWKHEQDVKISSTFPNSAIFCQKRFIILTPELGFTHAYCRHVKPLYLFCDRQRHVKSKIAICDPLNCALSKLKFTAIIEKNTEVQYQKHLELQTSFYRNPMFLQIEKFIQDFQRWICGDFENTNKKERIKLEPFQKSILIHIIFFISVTKLPTLANHVLDYLKYKFDIEFINESSVNILKQKASVFLVPRRHGKTWFMIPVICFLLKNLEGISIGYVAHQKHVSHFVMKDVEFKCRRFFPQKNITCQDNVITIEHETIKSTALFASCYNTHSIRGQSFNLLIVDESHFIKKDAFSTILGFLPQSSTKIIFISSTNSGNHSTSFLTKLSNSPFEMLTVVSYVCEDHVHILNDRGNATTCACYRLHKPKFISINADVKKTADLFLEGAFKHEIMGGSLCNVVNDTLITEQGLIEFDLFRYSTISKQIIPFLGKELYIYIDPAYTINRRASGTGVAAIGTYGDQYIIYGMEHYFLESLLSNSDASIAECASHMILAVLELHPFFTELKIIIEGNSNQSSAVKIACILKQTISVIRYKHITFFHTLDQSQIAQPFYLLGREKRLAVEYFISNFNSGYIKASQELISFTIKITYDPIEYVIEQIKNLHQININEHVTYNAKKQTCSDDLLISIIMAIYMCHEGKQTSFKEI.

Residues 205-212 (VPRRHGKT) carry the Walker A motif motif. Positions 297–302 (LLIVDE) match the Walker B motif motif. The active-site For ATPase activity is Glu-302. Catalysis depends on for nuclease activity residues Asp-455, Glu-526, and Asp-640.

The protein belongs to the herpesviridae TRM3 protein family. As to quaternary structure, interacts with the terminase subunits TRM1 and TRM2. Interacts with portal protein.

It localises to the host nucleus. In terms of biological role, component of the molecular motor that translocates viral genomic DNA in empty capsid during DNA packaging. Forms a tripartite terminase complex together with TRM1 and TRM2 in the host cytoplasm. Once the complex reaches the host nucleus, it interacts with the capsid portal vertex. This portal forms a ring in which genomic DNA is translocated into the capsid. TRM3 carries an RNase H-like nuclease activity that plays an important role for the cleavage of concatemeric viral DNA into unit length genomes. In Human herpesvirus 7 (strain JI) (HHV-7), this protein is Tripartite terminase subunit 3.